Reading from the N-terminus, the 495-residue chain is Growth/differentiation factor 5 (495 aa).

A signal peptide spans 1–27 (MRLPKLLTLLLWHLAWLDLELICTVLG). A propeptide spanning residues 28–375 (APDLGQRTPG…YLFSQRRKRR (348 aa)) is cleaved from the precursor. Positions 30–162 (DLGQRTPGAK…KEPFRPPPIT (133 aa)) are disordered. Over residues 124 to 137 (GGKASSKAGSAPSS) the composition is skewed to low complexity. A compositionally biased stretch (basic and acidic residues) spans 142–156 (KTREPGTPREPKEPF). The N-linked (GlcNAc...) asparagine glycan is linked to asparagine 183. Intrachain disulfides connect cysteine 394–cysteine 460, cysteine 423–cysteine 492, and cysteine 427–cysteine 494.

The protein belongs to the TGF-beta family. In terms of assembly, homodimer; disulfide-linked. Interacts with serine proteases, HTRA1 and HTRA3. Following LPS binding, may form a complex with CXCR4, HSP90AA1 and HSPA8. Interacts with high affinity with NOG; inhibits chondrogenesis. Interacts with high affinity with BMPR1B and lower affinity with BMPR1A; positively regulates chondrocyte differentiation and induces SMAD-dependent signaling. Interacts with FBN1 (via N-terminal domain) and FBN2. Interacts with TGFBR3.

It localises to the secreted. The protein localises to the cell membrane. Growth factor involved in bone and cartilage formation. During cartilage development regulates differentiation of chondrogenic tissue through two pathways. Firstly, positively regulates differentiation of chondrogenic tissue through its binding of high affinity with BMPR1B and of less affinity with BMPR1A, leading to induction of SMAD1-SMAD5-SMAD8 complex phosphorylation and then SMAD protein signaling transduction. Secondly, negatively regulates chondrogenic differentiation through its interaction with NOG. Required to prevent excessive muscle loss upon denervation. This function requires SMAD4 and is mediated by phosphorylated SMAD1/5/8. Binds bacterial lipopolysaccharide (LPS) and mediates LPS-induced inflammatory response, including TNF secretion by monocytes. In Mus musculus (Mouse), this protein is Growth/differentiation factor 5 (Gdf5).